We begin with the raw amino-acid sequence, 482 residues long: tRNA sulfurtransferase (482 aa).

One can recognise a THUMP domain in the interval 61–165; that stretch reads LTIRDALTRI…DDRLLLIKGR (105 aa). ATP is bound by residues 183–184, lysine 265, glycine 287, and glutamine 296; that span reads LI. A disulfide bridge connects residues cysteine 344 and cysteine 456. The Rhodanese domain occupies 404-482; sequence FGPNDVILDI…GFKNVKVYRP (79 aa). Cysteine 456 serves as the catalytic Cysteine persulfide intermediate.

This sequence belongs to the ThiI family. As to quaternary structure, interacts with IscS.

It is found in the cytoplasm. It catalyses the reaction [ThiI sulfur-carrier protein]-S-sulfanyl-L-cysteine + a uridine in tRNA + 2 reduced [2Fe-2S]-[ferredoxin] + ATP + H(+) = [ThiI sulfur-carrier protein]-L-cysteine + a 4-thiouridine in tRNA + 2 oxidized [2Fe-2S]-[ferredoxin] + AMP + diphosphate. The enzyme catalyses [ThiS sulfur-carrier protein]-C-terminal Gly-Gly-AMP + S-sulfanyl-L-cysteinyl-[cysteine desulfurase] + AH2 = [ThiS sulfur-carrier protein]-C-terminal-Gly-aminoethanethioate + L-cysteinyl-[cysteine desulfurase] + A + AMP + 2 H(+). It participates in cofactor biosynthesis; thiamine diphosphate biosynthesis. Its function is as follows. Catalyzes the ATP-dependent transfer of a sulfur to tRNA to produce 4-thiouridine in position 8 of tRNAs, which functions as a near-UV photosensor. Also catalyzes the transfer of sulfur to the sulfur carrier protein ThiS, forming ThiS-thiocarboxylate. This is a step in the synthesis of thiazole, in the thiamine biosynthesis pathway. The sulfur is donated as persulfide by IscS. The protein is tRNA sulfurtransferase of Escherichia coli O157:H7.